The following is a 454-amino-acid chain: GTPase Der (454 aa).

EngA-type G domains are found at residues 4 to 168 and 178 to 352; these read PQVA…PEKD and MKIA…KQAQ. Residues 10-17, 57-61, 120-123, 184-191, 231-235, and 296-299 each bind GTP; these read GRPNVGKS, DTGGM, NKAD, GRRNVGKS, DTPGL, and NKWD. The KH-like domain occupies 353–437; that stretch reads SRVSTGELNR…PIKLYMQQRS (85 aa).

This sequence belongs to the TRAFAC class TrmE-Era-EngA-EngB-Septin-like GTPase superfamily. EngA (Der) GTPase family. In terms of assembly, associates with the 50S ribosomal subunit.

Its function is as follows. GTPase that plays an essential role in the late steps of ribosome biogenesis. The protein is GTPase Der of Rhodopirellula baltica (strain DSM 10527 / NCIMB 13988 / SH1).